The chain runs to 158 residues: NADH-quinone oxidoreductase subunit B (158 aa).

[4Fe-4S] cluster-binding residues include cysteine 37, cysteine 38, cysteine 102, and cysteine 132.

It belongs to the complex I 20 kDa subunit family. As to quaternary structure, NDH-1 is composed of 14 different subunits. Subunits NuoB, C, D, E, F, and G constitute the peripheral sector of the complex. The cofactor is [4Fe-4S] cluster.

The protein localises to the cell inner membrane. It carries out the reaction a quinone + NADH + 5 H(+)(in) = a quinol + NAD(+) + 4 H(+)(out). In terms of biological role, NDH-1 shuttles electrons from NADH, via FMN and iron-sulfur (Fe-S) centers, to quinones in the respiratory chain. Couples the redox reaction to proton translocation (for every two electrons transferred, four hydrogen ions are translocated across the cytoplasmic membrane), and thus conserves the redox energy in a proton gradient. This Aromatoleum aromaticum (strain DSM 19018 / LMG 30748 / EbN1) (Azoarcus sp. (strain EbN1)) protein is NADH-quinone oxidoreductase subunit B.